The chain runs to 144 residues: D-aminoacyl-tRNA deacylase (144 aa).

Positions 136 to 137 match the Gly-cisPro motif, important for rejection of L-amino acids motif; sequence GP.

Belongs to the DTD family. As to quaternary structure, homodimer.

It is found in the cytoplasm. It carries out the reaction glycyl-tRNA(Ala) + H2O = tRNA(Ala) + glycine + H(+). It catalyses the reaction a D-aminoacyl-tRNA + H2O = a tRNA + a D-alpha-amino acid + H(+). In terms of biological role, an aminoacyl-tRNA editing enzyme that deacylates mischarged D-aminoacyl-tRNAs. Also deacylates mischarged glycyl-tRNA(Ala), protecting cells against glycine mischarging by AlaRS. Acts via tRNA-based rather than protein-based catalysis; rejects L-amino acids rather than detecting D-amino acids in the active site. By recycling D-aminoacyl-tRNA to D-amino acids and free tRNA molecules, this enzyme counteracts the toxicity associated with the formation of D-aminoacyl-tRNA entities in vivo and helps enforce protein L-homochirality. The polypeptide is D-aminoacyl-tRNA deacylase (Histophilus somni (strain 129Pt) (Haemophilus somnus)).